Consider the following 245-residue polypeptide: Thymidylate kinase (245 aa).

An ATP-binding site is contributed by 55–62 (GIDGVGKS).

It belongs to the thymidylate kinase family.

It carries out the reaction dTMP + ATP = dTDP + ADP. Functionally, phosphorylation of dTMP to form dTDP in both de novo and salvage pathways of dTTP synthesis. The chain is Thymidylate kinase from Rhodopirellula baltica (strain DSM 10527 / NCIMB 13988 / SH1).